The sequence spans 37 residues: Large ribosomal subunit protein bL36c (37 aa).

This sequence belongs to the bacterial ribosomal protein bL36 family.

It is found in the plastid. The protein resides in the chloroplast. The sequence is that of Large ribosomal subunit protein bL36c (rpl36) from Chlorella vulgaris (Green alga).